The chain runs to 477 residues: Cysteine--tRNA ligase (477 aa).

Cys-28 contributes to the Zn(2+) binding site. The 'HIGH' region motif lies at 30–40 (PTVYDYPHLGH). Zn(2+) is bound by residues Cys-208, His-233, and Glu-237. The 'KMSKS' region signature appears at 265–269 (KMSKS). Lys-268 lines the ATP pocket.

It belongs to the class-I aminoacyl-tRNA synthetase family. Zn(2+) is required as a cofactor.

It localises to the cytoplasm. It catalyses the reaction tRNA(Cys) + L-cysteine + ATP = L-cysteinyl-tRNA(Cys) + AMP + diphosphate. The chain is Cysteine--tRNA ligase from Pyrococcus furiosus (strain ATCC 43587 / DSM 3638 / JCM 8422 / Vc1).